The primary structure comprises 350 residues: Probable V-type proton ATPase subunit d 2 (350 aa).

The protein belongs to the V-ATPase V0D/AC39 subunit family. In terms of assembly, V-ATPase is a heteromultimeric enzyme made up of two complexes: the ATP-hydrolytic V1 complex and the proton translocation V0 complex. The V1 complex consists of three catalytic AB heterodimers that form a heterohexamer, three peripheral stalks each consisting of EG heterodimers, one central rotor including subunits D and F, and the regulatory subunits C and H. The proton translocation complex V0 consists of the proton transport subunit a, a ring of proteolipid subunits c9c'', rotary subunit d, subunits e and f, and the accessory subunits VhaAC45 and ATP6AP2.

In terms of biological role, subunit of the V0 complex of vacuolar(H+)-ATPase (V-ATPase), a multisubunit enzyme composed of a peripheral complex (V1) that hydrolyzes ATP and a membrane integral complex (V0) that translocates protons. V-ATPase is responsible for acidifying and maintaining the pH of intracellular compartments and in some cell types, is targeted to the plasma membrane, where it is responsible for acidifying the extracellular environment. May play a role in coupling of proton transport and ATP hydrolysis. This Drosophila melanogaster (Fruit fly) protein is Probable V-type proton ATPase subunit d 2 (VhaAC39-2).